A 318-amino-acid chain; its full sequence is Probable pyridoxal 5'-phosphate synthase subunit PDX1.1 (318 aa).

D49 contributes to the D-ribose 5-phosphate binding site. Residue K106 is the Schiff-base intermediate with D-ribose 5-phosphate of the active site. D-ribose 5-phosphate is bound at residue G178. R190 provides a ligand contact to D-glyceraldehyde 3-phosphate. D-ribose 5-phosphate-binding positions include G239 and 260-261; that span reads GS.

The protein belongs to the PdxS/SNZ family.

It catalyses the reaction aldehydo-D-ribose 5-phosphate + D-glyceraldehyde 3-phosphate + L-glutamine = pyridoxal 5'-phosphate + L-glutamate + phosphate + 3 H2O + H(+). Its pathway is cofactor biosynthesis; pyridoxal 5'-phosphate biosynthesis. Its function is as follows. Catalyzes the formation of pyridoxal 5'-phosphate from ribose 5-phosphate (RBP), glyceraldehyde 3-phosphate (G3P) and ammonia. The ammonia is provided by PDX2. Can also use ribulose 5-phosphate and dihydroxyacetone phosphate as substrates, resulting from enzyme-catalyzed isomerization of RBP and G3P, respectively. Also plays an indirect role in resistance to singlet oxygen-generating photosensitizers. This chain is Probable pyridoxal 5'-phosphate synthase subunit PDX1.1 (PDX11), found in Oryza sativa subsp. japonica (Rice).